Here is a 228-residue protein sequence, read N- to C-terminus: 7-cyano-7-deazaguanine synthase (228 aa).

7–17 is a binding site for ATP; it reads LSGGLDSSTAL. Zn(2+) contacts are provided by C190, C202, C205, and C208.

This sequence belongs to the QueC family. It depends on Zn(2+) as a cofactor.

The catalysed reaction is 7-carboxy-7-deazaguanine + NH4(+) + ATP = 7-cyano-7-deazaguanine + ADP + phosphate + H2O + H(+). It functions in the pathway purine metabolism; 7-cyano-7-deazaguanine biosynthesis. Its function is as follows. Catalyzes the ATP-dependent conversion of 7-carboxy-7-deazaguanine (CDG) to 7-cyano-7-deazaguanine (preQ(0)). This chain is 7-cyano-7-deazaguanine synthase, found in Acaryochloris marina (strain MBIC 11017).